The primary structure comprises 470 residues: ATP synthase subunit beta (470 aa).

Residue 156 to 163 (GGAGVGKT) participates in ATP binding.

This sequence belongs to the ATPase alpha/beta chains family. In terms of assembly, F-type ATPases have 2 components, CF(1) - the catalytic core - and CF(0) - the membrane proton channel. CF(1) has five subunits: alpha(3), beta(3), gamma(1), delta(1), epsilon(1). CF(0) has three main subunits: a(1), b(2) and c(9-12). The alpha and beta chains form an alternating ring which encloses part of the gamma chain. CF(1) is attached to CF(0) by a central stalk formed by the gamma and epsilon chains, while a peripheral stalk is formed by the delta and b chains.

Its subcellular location is the cell inner membrane. It catalyses the reaction ATP + H2O + 4 H(+)(in) = ADP + phosphate + 5 H(+)(out). Its function is as follows. Produces ATP from ADP in the presence of a proton gradient across the membrane. The catalytic sites are hosted primarily by the beta subunits. This is ATP synthase subunit beta from Thermosipho africanus (strain TCF52B).